A 309-amino-acid chain; its full sequence is Mitochondrial import receptor subunit TOM34 (309 aa).

3 TPR repeats span residues 9-42, 51-84, and 86-118; these read VEEL…LQAQ, SVLY…VPFS, and KPLL…DDSV. A Phosphoserine modification is found at Ser160. Residues 161-189 form a disordered region; that stretch reads LPSENHKEMAKSKSKETTATKNRVPSAGD. Basic and acidic residues predominate over residues 164-178; the sequence is ENHKEMAKSKSKETT. Position 186 is a phosphoserine (Ser186). TPR repeat units follow at residues 193 to 226, 227 to 260, and 262 to 294; these read AKVL…SNLE, SATY…DGKN, and KAFY…EPRN. Lys197 participates in a covalent cross-link: Glycyl lysine isopeptide (Lys-Gly) (interchain with G-Cter in SUMO2).

The protein belongs to the Tom34 family. Interacts with HSP90A, VCP, ATP6V1D, KIAA0665, AMPK, and DMAP1 through its TPR repeat.

It localises to the cytoplasm. Its subcellular location is the mitochondrion outer membrane. Its function is as follows. Plays a role in the import of cytosolically synthesized preproteins into mitochondria. Binds the mature portion of precursor proteins. Interacts with cellular components, and possesses weak ATPase activity. May be a chaperone-like protein that helps to keep newly synthesized precursors in an unfolded import compatible state. This Pongo abelii (Sumatran orangutan) protein is Mitochondrial import receptor subunit TOM34 (TOMM34).